Here is a 254-residue protein sequence, read N- to C-terminus: 3-oxo-5-alpha-steroid 4-dehydrogenase 2 (254 aa).

The next 4 membrane-spanning stretches (helical) occupy residues 8–28 (SPVL…LYFA), 72–92 (PRSL…AHYF), 146–166 (FSLG…SDYI), and 206–226 (LATW…FLGL).

It belongs to the steroid 5-alpha reductase family.

Its subcellular location is the microsome membrane. The protein localises to the endoplasmic reticulum membrane. It carries out the reaction a 3-oxo-5alpha-steroid + NADP(+) = a 3-oxo-Delta(4)-steroid + NADPH + H(+). The catalysed reaction is 17beta-hydroxy-5alpha-androstan-3-one + NADP(+) = testosterone + NADPH + H(+). It catalyses the reaction 5alpha-pregnane-3,20-dione + NADP(+) = progesterone + NADPH + H(+). Converts testosterone (T) into 5-alpha-dihydrotestosterone (DHT) and progesterone or corticosterone into their corresponding 5-alpha-3-oxosteroids. It plays a central role in sexual differentiation and androgen physiology. The sequence is that of 3-oxo-5-alpha-steroid 4-dehydrogenase 2 (SRD5A2) from Sus scrofa (Pig).